Reading from the N-terminus, the 161-residue chain is Periplasmic chaperone Spy (161 aa).

An N-terminal signal peptide occupies residues 1 to 23 (MRKLTALFVASTLALGAANLAHA). Residues 140–161 (ANFEKRLTERPAAKGKMPATAE) form a disordered region. Basic and acidic residues predominate over residues 142–151 (FEKRLTERPA).

It belongs to the CpxP/Spy family. In terms of assembly, homodimer.

The protein localises to the periplasm. In terms of biological role, an ATP-independent periplasmic chaperone, decreases protein aggregation and helps protein refolding. Binds substrate over a large region of its convex inner surface. Substrate protein folds while it is bound to chaperone. Increasing Spy flexibility increases its substrate affinity and overall chaperone activity (shown for 3 different substrates). Protects proteins in vitro against tannin inactivation; tannins have antimicrobial activity. Overexpression enhances the stability of otherwise unstable periplasmic proteins. This is Periplasmic chaperone Spy from Escherichia coli (strain K12).